We begin with the raw amino-acid sequence, 172 residues long: Large ribosomal subunit protein uL10 (172 aa).

Belongs to the universal ribosomal protein uL10 family. As to quaternary structure, part of the ribosomal stalk of the 50S ribosomal subunit. The N-terminus interacts with L11 and the large rRNA to form the base of the stalk. The C-terminus forms an elongated spine to which L12 dimers bind in a sequential fashion forming a multimeric L10(L12)X complex.

Functionally, forms part of the ribosomal stalk, playing a central role in the interaction of the ribosome with GTP-bound translation factors. The polypeptide is Large ribosomal subunit protein uL10 (Chlorobium phaeobacteroides (strain DSM 266 / SMG 266 / 2430)).